A 489-amino-acid chain; its full sequence is Glutamate--tRNA ligase (489 aa).

Residues 11–21 (PSPTGHLHIGG) carry the 'HIGH' region motif. The 'KMSKS' region signature appears at 253 to 257 (KLSKR). Lysine 256 serves as a coordination point for ATP.

The protein belongs to the class-I aminoacyl-tRNA synthetase family. Glutamate--tRNA ligase type 1 subfamily. In terms of assembly, monomer.

It is found in the cytoplasm. The enzyme catalyses tRNA(Glu) + L-glutamate + ATP = L-glutamyl-tRNA(Glu) + AMP + diphosphate. Catalyzes the attachment of glutamate to tRNA(Glu) in a two-step reaction: glutamate is first activated by ATP to form Glu-AMP and then transferred to the acceptor end of tRNA(Glu). This chain is Glutamate--tRNA ligase, found in Geobacillus stearothermophilus (Bacillus stearothermophilus).